A 115-amino-acid polypeptide reads, in one-letter code: Protein E6A (115 aa).

A signal peptide spans 1–25 (MTDKFYFYGLFWGILLFVFLQHMQG).

The chain is Protein E6A (12) from Equine herpesvirus 2 (strain 86/87) (EHV-2).